The chain runs to 1872 residues: Histone acetyltransferase KAT6B (1872 aa).

The 77-residue stretch at 1 to 77 (MVKLANPLYT…LASYKDPDNP (77 aa)) folds into the SAMD1-like winged helix (WH) domain. Disordered regions lie at residues 70-103 (SYKD…CNDL) and 168-207 (KEGP…HEKD). Positions 104–177 (RNVDWNKLLK…KEGPQYRVNS (74 aa)) constitute an H15 domain. Residues 189-202 (PSAFPSSLPPVSLL) are compositionally biased toward low complexity. PHD-type zinc fingers lie at residues 214-273 (IPIC…CKTC) and 270-321 (CKTC…CRPK). S356 bears the Phosphoserine mark. The segment at 361–417 (EGSMSAFTGRGSPGRGQKTKVSTTPSSGHAASGKHSSSRLAVTDPTRPGATTKTTTS) is disordered. Residues 362 to 535 (GSMSAFTGRG…ECESGVEDCG (174 aa)) form a negatively regulates HAT activity region. The span at 386–395 (SSGHAASGKH) shows a compositional bias: low complexity. Residue K491 forms a Glycyl lysine isopeptide (Lys-Gly) (interchain with G-Cter in SUMO2) linkage. One can recognise an MYST-type HAT domain in the interval 533 to 807 (DCGRYPSVIE…LDPESLRWTP (275 aa)). Residues 536–826 (RYPSVIEFGK…EEEREAEKEA (291 aa)) form a catalytic region. Residues 566–591 (LYLCEFCLKYMKSKNILLRHSKKCGW) form a C2HC MYST-type zinc finger. Positions 570 to 826 (EFCLKYMKSK…EEEREAEKEA (257 aa)) are interaction with BRPF1. K633 is modified (N6-acetyllysine; by autocatalysis). Residues 674-678 (SCIMI) and 683-689 (QRQGFGR) contribute to the acetyl-CoA site. The active-site Proton donor/acceptor is the E709. S713 is an acetyl-CoA binding site. Residues 846-860 (SRVSSRQSSAKVQSK) show a composition bias toward low complexity. Disordered stretches follow at residues 846–1018 (SRVS…NHFF), 1031–1252 (DAEH…FKDA), 1283–1358 (MSCN…DDTF), and 1388–1418 (DECQ…SPSV). N6-acetyllysine is present on residues K856, K860, and K862. Residue S866 is modified to Phosphoserine. A compositionally biased stretch (acidic residues) spans 887-909 (SEEEEEEEEEDDEEEEEEEEEES). Positions 910-924 (IQTSPPRLTKPQSVS) are enriched in polar residues. Positions 925–944 (IKRKRPFVVKKKRGRKRRRI) are enriched in basic residues. A compositionally biased stretch (low complexity) spans 946 to 959 (SSVTTETISETTEV). Over residues 991-1004 (PVLRKAFPHQPGKK) the composition is skewed to basic residues. 2 stretches are compositionally biased toward basic and acidic residues: residues 1031–1047 (DAEH…EPLK) and 1094–1114 (EEQK…REVT). The segment covering 1155–1176 (EEGEEEGEEEGEREEQEEEEEV) has biased composition (acidic residues). Residues 1177 to 1207 (TTEKDLDGAKSKENPEPEISMEKEDPVHLGD) are compositionally biased toward basic and acidic residues. Residues 1208–1217 (HEEDEDEEEE) are compositionally biased toward acidic residues. 2 stretches are compositionally biased toward basic and acidic residues: residues 1238–1252 (NMER…FKDA) and 1310–1320 (QTQKQDQKNSD). Residues 1339–1349 (ETAQAVQSLTQ) are compositionally biased toward polar residues. The interval 1359 to 1872 (PDCAETQEAC…QSLNGSYMRR (514 aa)) is interaction with RUNX1 and RUNX2. The span at 1393 to 1410 (SDHSSPVSSVHSHPGQSV) shows a compositional bias: low complexity.

Belongs to the MYST (SAS/MOZ) family. Component of the MOZ/MORF complex composed at least of ING5, KAT6A, KAT6B, MEAF6 and one of BRPF1, BRD1/BRPF2 and BRPF3. Interacts with RUNX1 and RUNX2. In terms of processing, autoacetylation at Lys-633 is required for proper function. In terms of tissue distribution, ubiquitously expressed.

The protein localises to the nucleus. The catalysed reaction is L-lysyl-[protein] + acetyl-CoA = N(6)-acetyl-L-lysyl-[protein] + CoA + H(+). Its function is as follows. Histone acetyltransferase which may be involved in both positive and negative regulation of transcription. Required for RUNX2-dependent transcriptional activation. Component of the MOZ/MORF complex which has a histone H3 acetyltransferase activity. Involved in cerebral cortex development. This Mus musculus (Mouse) protein is Histone acetyltransferase KAT6B (Kat6b).